A 398-amino-acid chain; its full sequence is Acetate kinase (398 aa).

A Mg(2+)-binding site is contributed by asparagine 7. Residue lysine 14 participates in ATP binding. A substrate-binding site is contributed by arginine 91. Aspartate 148 (proton donor/acceptor) is an active-site residue. ATP contacts are provided by residues histidine 208–glycine 212, aspartate 283–arginine 285, and glycine 331–asparagine 335. Residue glutamate 385 participates in Mg(2+) binding.

Belongs to the acetokinase family. In terms of assembly, homodimer. It depends on Mg(2+) as a cofactor. Mn(2+) serves as cofactor.

The protein localises to the cytoplasm. It catalyses the reaction acetate + ATP = acetyl phosphate + ADP. It participates in metabolic intermediate biosynthesis; acetyl-CoA biosynthesis; acetyl-CoA from acetate: step 1/2. Its function is as follows. Catalyzes the formation of acetyl phosphate from acetate and ATP. Can also catalyze the reverse reaction. The chain is Acetate kinase from Porphyromonas gingivalis (strain ATCC BAA-308 / W83).